The primary structure comprises 57 residues: Small ribosomal subunit protein eS27 (57 aa).

Cysteine 10, cysteine 13, cysteine 29, and cysteine 32 together coordinate Zn(2+). The C4-type zinc-finger motif lies at 10–32; sequence CPDCENEQSLFEKAASEVSCAVC.

It belongs to the eukaryotic ribosomal protein eS27 family. Part of the 30S ribosomal subunit. Zn(2+) is required as a cofactor.

This Haloarcula marismortui (strain ATCC 43049 / DSM 3752 / JCM 8966 / VKM B-1809) (Halobacterium marismortui) protein is Small ribosomal subunit protein eS27.